We begin with the raw amino-acid sequence, 255 residues long: Small ribosomal subunit protein eS4 (255 aa).

In terms of domain architecture, S4 RNA-binding spans 44-107 (IPLLILVRDV…DEYYRMIPYP (64 aa)).

It belongs to the eukaryotic ribosomal protein eS4 family.

In Ignicoccus hospitalis (strain KIN4/I / DSM 18386 / JCM 14125), this protein is Small ribosomal subunit protein eS4.